The chain runs to 113 residues: Putative pterin-4-alpha-carbinolamine dehydratase (113 aa).

This sequence belongs to the pterin-4-alpha-carbinolamine dehydratase family.

The catalysed reaction is (4aS,6R)-4a-hydroxy-L-erythro-5,6,7,8-tetrahydrobiopterin = (6R)-L-erythro-6,7-dihydrobiopterin + H2O. The chain is Putative pterin-4-alpha-carbinolamine dehydratase from Chlorobium limicola (strain DSM 245 / NBRC 103803 / 6330).